A 333-amino-acid polypeptide reads, in one-letter code: tRNA N6-adenosine threonylcarbamoyltransferase (333 aa).

Positions 111 and 115 each coordinate Fe cation. Substrate is bound by residues 134 to 138, D167, G180, and N272; that span reads LVSGG. D300 lines the Fe cation pocket.

Belongs to the KAE1 / TsaD family. It depends on Fe(2+) as a cofactor.

The protein localises to the cytoplasm. The enzyme catalyses L-threonylcarbamoyladenylate + adenosine(37) in tRNA = N(6)-L-threonylcarbamoyladenosine(37) in tRNA + AMP + H(+). Required for the formation of a threonylcarbamoyl group on adenosine at position 37 (t(6)A37) in tRNAs that read codons beginning with adenine. Is involved in the transfer of the threonylcarbamoyl moiety of threonylcarbamoyl-AMP (TC-AMP) to the N6 group of A37, together with TsaE and TsaB. TsaD likely plays a direct catalytic role in this reaction. In Legionella pneumophila (strain Paris), this protein is tRNA N6-adenosine threonylcarbamoyltransferase.